A 31-amino-acid polypeptide reads, in one-letter code: Cytochrome b6-f complex subunit 6 (31 aa).

The helical transmembrane segment at 4–24 (LTSYFGFLLAALTITLALFIG) threads the bilayer.

Belongs to the PetL family. In terms of assembly, the 4 large subunits of the cytochrome b6-f complex are cytochrome b6, subunit IV (17 kDa polypeptide, PetD), cytochrome f and the Rieske protein, while the 4 small subunits are PetG, PetL, PetM and PetN. The complex functions as a dimer.

The protein localises to the plastid. The protein resides in the chloroplast thylakoid membrane. Component of the cytochrome b6-f complex, which mediates electron transfer between photosystem II (PSII) and photosystem I (PSI), cyclic electron flow around PSI, and state transitions. PetL is important for photoautotrophic growth as well as for electron transfer efficiency and stability of the cytochrome b6-f complex. This Triticum aestivum (Wheat) protein is Cytochrome b6-f complex subunit 6.